Consider the following 310-residue polypeptide: 17-beta-hydroxysteroid dehydrogenase type 3 (310 aa).

Residue 48 to 77 coordinates NADP(+); the sequence is GQWAVITGAGDGIGKAYSFELAKRGLNVVL. S185 serves as a coordination point for substrate. Y198 functions as the Proton acceptor in the catalytic mechanism.

The protein belongs to the short-chain dehydrogenases/reductases (SDR) family. 17-beta-HSD 3 subfamily. As to expression, testis.

It localises to the endoplasmic reticulum. The enzyme catalyses a 17beta-hydroxy steroid + NADP(+) = a 17-oxo steroid + NADPH + H(+). The catalysed reaction is testosterone + NADP(+) = androst-4-ene-3,17-dione + NADPH + H(+). It carries out the reaction 17beta-estradiol + NADP(+) = estrone + NADPH + H(+). It catalyses the reaction 3beta-hydroxyandrost-5-en-17-one + NADPH + H(+) = androst-5-en-3beta,17beta-diol + NADP(+). The enzyme catalyses 17beta-hydroxy-5alpha-androstan-3-one + NADP(+) = 5alpha-androstan-3,17-dione + NADPH + H(+). The catalysed reaction is androsterone + NADPH + H(+) = 5alpha-androstane-3alpha,17beta-diol + NADP(+). It carries out the reaction 3beta-hydroxy-5alpha-androstan-17-one + NADPH + H(+) = 5alpha-androstane-3beta,17beta-diol + NADP(+). It catalyses the reaction androst-4-ene-3,11,17-trione + NADPH + H(+) = 17beta-hydroxyandrost-4-ene-3,11-dione + NADP(+). The enzyme catalyses 11beta-hydroxyandrost-4-ene-3,17-dione + NADPH + H(+) = 11beta,17beta-dihydroxyandrost-4-ene-3-one + NADP(+). It functions in the pathway hormone biosynthesis; testosterone biosynthesis. The protein operates within steroid metabolism. Catalyzes the conversion of 17-oxosteroids to 17beta-hydroxysteroids. Favors the reduction of androstenedione to testosterone. Testosterone is the key androgen driving male development and function. Uses NADPH while the two other EDH17B enzymes use NADH. Androgens such as epiandrosterone, dehydroepiandrosterone, androsterone and androstanedione are accepted as substrates and reduced at C-17. Can reduce 11-ketoandrostenedione as well as 11beta-hydroxyandrostenedione at C-17 to the respective testosterone forms. The sequence is that of 17-beta-hydroxysteroid dehydrogenase type 3 from Homo sapiens (Human).